The primary structure comprises 280 residues: DNA repair protein RecO (280 aa).

The interval 261–280 (DMAHGNHTGQEDLPATASGA) is disordered.

The protein belongs to the RecO family.

Its function is as follows. Involved in DNA repair and RecF pathway recombination. This chain is DNA repair protein RecO, found in Mycolicibacterium smegmatis (strain ATCC 700084 / mc(2)155) (Mycobacterium smegmatis).